Consider the following 344-residue polypeptide: Holliday junction branch migration complex subunit RuvB (344 aa).

Positions 1–182 (MRIELLNTPP…FGINSRFDYY (182 aa)) are large ATPase domain (RuvB-L). Residues I21, R22, G63, K66, T67, T68, 129–131 (EDF), R172, Y182, and R219 contribute to the ATP site. Residue T67 coordinates Mg(2+). Positions 183–253 (APELLEGIIR…IAMKTLDCLE (71 aa)) are small ATPAse domain (RuvB-S). A head domain (RuvB-H) region spans residues 256–344 (EEGLDDMDKK…ISLFDAQPTS (89 aa)). 2 residues coordinate DNA: R311 and R316.

This sequence belongs to the RuvB family. Homohexamer. Forms an RuvA(8)-RuvB(12)-Holliday junction (HJ) complex. HJ DNA is sandwiched between 2 RuvA tetramers; dsDNA enters through RuvA and exits via RuvB. An RuvB hexamer assembles on each DNA strand where it exits the tetramer. Each RuvB hexamer is contacted by two RuvA subunits (via domain III) on 2 adjacent RuvB subunits; this complex drives branch migration. In the full resolvosome a probable DNA-RuvA(4)-RuvB(12)-RuvC(2) complex forms which resolves the HJ.

It is found in the cytoplasm. The catalysed reaction is ATP + H2O = ADP + phosphate + H(+). Its function is as follows. The RuvA-RuvB-RuvC complex processes Holliday junction (HJ) DNA during genetic recombination and DNA repair, while the RuvA-RuvB complex plays an important role in the rescue of blocked DNA replication forks via replication fork reversal (RFR). RuvA specifically binds to HJ cruciform DNA, conferring on it an open structure. The RuvB hexamer acts as an ATP-dependent pump, pulling dsDNA into and through the RuvAB complex. RuvB forms 2 homohexamers on either side of HJ DNA bound by 1 or 2 RuvA tetramers; 4 subunits per hexamer contact DNA at a time. Coordinated motions by a converter formed by DNA-disengaged RuvB subunits stimulates ATP hydrolysis and nucleotide exchange. Immobilization of the converter enables RuvB to convert the ATP-contained energy into a lever motion, pulling 2 nucleotides of DNA out of the RuvA tetramer per ATP hydrolyzed, thus driving DNA branch migration. The RuvB motors rotate together with the DNA substrate, which together with the progressing nucleotide cycle form the mechanistic basis for DNA recombination by continuous HJ branch migration. Branch migration allows RuvC to scan DNA until it finds its consensus sequence, where it cleaves and resolves cruciform DNA. This is Holliday junction branch migration complex subunit RuvB from Pelodictyon phaeoclathratiforme (strain DSM 5477 / BU-1).